A 485-amino-acid chain; its full sequence is Serine hydroxymethyltransferase, mitochondrial (485 aa).

K259 is modified (N6-(pyridoxal phosphate)lysine).

The protein belongs to the SHMT family. As to quaternary structure, homotetramer. It depends on pyridoxal 5'-phosphate as a cofactor.

It is found in the mitochondrion. The enzyme catalyses (6R)-5,10-methylene-5,6,7,8-tetrahydrofolate + glycine + H2O = (6S)-5,6,7,8-tetrahydrofolate + L-serine. It functions in the pathway one-carbon metabolism; tetrahydrofolate interconversion. Its function is as follows. Interconversion of serine and glycine. The protein is Serine hydroxymethyltransferase, mitochondrial (SHM1) of Candida glabrata (strain ATCC 2001 / BCRC 20586 / JCM 3761 / NBRC 0622 / NRRL Y-65 / CBS 138) (Yeast).